The sequence spans 90 residues: Probable Fe(2+)-trafficking protein (90 aa).

It belongs to the Fe(2+)-trafficking protein family. In terms of assembly, monomer.

Functionally, could be a mediator in iron transactions between iron acquisition and iron-requiring processes, such as synthesis and/or repair of Fe-S clusters in biosynthetic enzymes. This chain is Probable Fe(2+)-trafficking protein, found in Enterobacter sp. (strain 638).